The primary structure comprises 201 residues: Holliday junction branch migration complex subunit RuvA (201 aa).

The segment at 1 to 64 is domain I; the sequence is MFAYIKGVLA…EFSHTLYGFL (64 aa). The domain II stretch occupies residues 65–143; sequence SYQERDIFEI…AIGHLDTSDH (79 aa). Residues 144–153 are flexible linker; it reads IEPLTQDPKS. The interval 153–201 is domain III; sequence SKSVQDAMLALINLGYNQTTAQKAIKQGMKELPEEIDLAQLITVALKHV.

It belongs to the RuvA family. Homotetramer. Forms an RuvA(8)-RuvB(12)-Holliday junction (HJ) complex. HJ DNA is sandwiched between 2 RuvA tetramers; dsDNA enters through RuvA and exits via RuvB. An RuvB hexamer assembles on each DNA strand where it exits the tetramer. Each RuvB hexamer is contacted by two RuvA subunits (via domain III) on 2 adjacent RuvB subunits; this complex drives branch migration. In the full resolvosome a probable DNA-RuvA(4)-RuvB(12)-RuvC(2) complex forms which resolves the HJ.

It is found in the cytoplasm. Its function is as follows. The RuvA-RuvB-RuvC complex processes Holliday junction (HJ) DNA during genetic recombination and DNA repair, while the RuvA-RuvB complex plays an important role in the rescue of blocked DNA replication forks via replication fork reversal (RFR). RuvA specifically binds to HJ cruciform DNA, conferring on it an open structure. The RuvB hexamer acts as an ATP-dependent pump, pulling dsDNA into and through the RuvAB complex. HJ branch migration allows RuvC to scan DNA until it finds its consensus sequence, where it cleaves and resolves the cruciform DNA. This Protochlamydia amoebophila (strain UWE25) protein is Holliday junction branch migration complex subunit RuvA.